A 201-amino-acid polypeptide reads, in one-letter code: dTTP/UTP pyrophosphatase (201 aa).

Asp81 (proton acceptor) is an active-site residue.

The protein belongs to the Maf family. YhdE subfamily. A divalent metal cation is required as a cofactor.

The protein localises to the cytoplasm. The enzyme catalyses dTTP + H2O = dTMP + diphosphate + H(+). It carries out the reaction UTP + H2O = UMP + diphosphate + H(+). Its function is as follows. Nucleoside triphosphate pyrophosphatase that hydrolyzes dTTP and UTP. May have a dual role in cell division arrest and in preventing the incorporation of modified nucleotides into cellular nucleic acids. The chain is dTTP/UTP pyrophosphatase from Dechloromonas aromatica (strain RCB).